A 252-amino-acid chain; its full sequence is Trypsin iota (252 aa).

The N-terminal stretch at 1–19 (MAVYGIVATVLVLLLLGDA) is a signal peptide. Positions 20–27 (SDVEATGR) are cleaved as a propeptide — activation peptide. The Peptidase S1 domain occupies 28-250 (IIGGSDQLIR…LRPWIVKAAN (223 aa)). Cys53 and Cys69 form a disulfide bridge. Active-site charge relay system residues include His68 and Asp113. 2 disulfide bridges follow: Cys175-Cys193 and Cys202-Cys226. Ser206 (charge relay system) is an active-site residue.

The protein belongs to the peptidase S1 family.

Its subcellular location is the secreted. It localises to the extracellular space. The catalysed reaction is Preferential cleavage: Arg-|-Xaa, Lys-|-Xaa.. This Drosophila melanogaster (Fruit fly) protein is Trypsin iota (iotaTry).